Reading from the N-terminus, the 474-residue chain is P2X purinoceptor 2 (474 aa).

Residues 1–42 (MAATHPKAPTAQRLRQGWSAFWDYETPKVIVVRNRPLGVVYR) lie on the Cytoplasmic side of the membrane. The chain crosses the membrane as a helical span at residues 43 to 60 (AVQLLILLYFVWYVFIVQ). At 61–333 (KSYQDSETGP…IVHGQAGKFS (273 aa)) the chain is on the extracellular side. Lys77 and Lys79 together coordinate ATP. Cystine bridges form between Cys121/Cys172, Cys132/Cys155, and Cys138/Cys166. Asn129 carries an N-linked (GlcNAc...) asparagine glycan. Asn190 carries N-linked (GlcNAc...) asparagine glycosylation. Thr192 provides a ligand contact to ATP. A disulfide bridge connects residues Cys222 and Cys232. N-linked (GlcNAc...) asparagine glycosylation occurs at Asn247. Cys266 and Cys275 are oxidised to a cystine. Residues Ser292, Asn296, and Arg298 each coordinate ATP. Asn306 carries N-linked (GlcNAc...) asparagine glycosylation. Lys315 is a binding site for ATP. Residues 316 to 329 (AYGIRIDVIVHGQA) are pore-forming motif. A helical transmembrane segment spans residues 334–354 (LIPTIINLATALTSIGVGSFL). The Cytoplasmic portion of the chain corresponds to 355–474 (CDWILLTFMN…PTDPKGLAQL (120 aa)). A disordered region spans residues 445–474 (PDRCVGQGLPSSESPLQDSTPTDPKGLAQL). Over residues 453-466 (LPSSESPLQDSTPT) the composition is skewed to polar residues.

Belongs to the P2X receptor family. In terms of assembly, homotrimer and heterotrimer; functional P2XRs are organized as homomeric and heteromeric trimers. Homotrimer. Forms heterodimer with P2RX1. Forms heterotrimer with P2RX6. Forms heterotrimer with P2RX3. In terms of tissue distribution, express in organ of Corti.

It localises to the cell membrane. The catalysed reaction is Ca(2+)(in) = Ca(2+)(out). It catalyses the reaction K(+)(in) = K(+)(out). The enzyme catalyses Na(+)(in) = Na(+)(out). Its activity is regulated as follows. Fast activation by external ATP. Exhibits slow desensitization during prolonged ATP activation. Not sensitive to the ATP agonist:alpha/beta-methylene-ATP. ATP-gated nonselective transmembrane cation channel permeable to potassium, sodium and calcium. Activation by extracellular ATP induces a variety of cellular responses, such as excitatory postsynaptic responses in sensory neurons, neuromuscular junctions (NMJ) formation, hearing, perception of taste and peristalsis. In the inner ear, regulates sound transduction and auditory neurotransmission, outer hair cell electromotility, inner ear gap junctions, and K(+) recycling. Mediates synaptic transmission between neurons and from neurons to smooth muscle. The sequence is that of P2X purinoceptor 2 (P2RX2) from Cavia porcellus (Guinea pig).